The primary structure comprises 260 residues: DNA-binding protein RFXANK (260 aa).

Residues Met-1–Gly-79 are disordered. Residues Gly-22–Asp-33 are compositionally biased toward acidic residues. Residues Ser-57–Gln-77 are compositionally biased toward polar residues. ANK repeat units lie at residues Leu-89 to Asn-118, Arg-123 to Ile-152, Glu-156 to Ile-185, Asn-189 to Thr-218, and Ser-222 to Gln-251.

In terms of assembly, forms homodimers. The RFX heterotetrameric complex consists of 2 molecules of RFX5 and one each of RFXAP and RFX-B/RFXANK; with each subunit representing a separate complementation group. Interacts (via ankyrin repeats) with RFX5 (via PxLPxI/L motif); the interaction is direct. RFX forms cooperative DNA binding complexes with X2BP and CBF/NF-Y. RFX associates with CIITA to form an active transcriptional complex. Interacts with RAF1. Interacts (via ankyrin repeats) with RFX7 (via PxLPxI/L motif). In terms of processing, phosphorylated by RAF1. Ubiquitous.

The protein localises to the cytoplasm. It localises to the nucleus. In terms of biological role, activates transcription from class II MHC promoters. Activation requires the activity of the MHC class II transactivator/CIITA. May regulate other genes in the cell. RFX binds the X1 box of MHC-II promoters. May also potentiate the activation of RAF1. Isoform 2 is not involved in the positive regulation of MHC class II genes. The protein is DNA-binding protein RFXANK (RFXANK) of Homo sapiens (Human).